The chain runs to 128 residues: Glycine cleavage system H protein (128 aa).

The Lipoyl-binding domain occupies Val24–Arg106. Lys65 carries the N6-lipoyllysine modification.

It belongs to the GcvH family. In terms of assembly, the glycine cleavage system is composed of four proteins: P, T, L and H. (R)-lipoate serves as cofactor.

Functionally, the glycine cleavage system catalyzes the degradation of glycine. The H protein shuttles the methylamine group of glycine from the P protein to the T protein. The sequence is that of Glycine cleavage system H protein from Edwardsiella ictaluri (strain 93-146).